The sequence spans 61 residues: UPF0434 protein Bfl377 (61 aa).

Belongs to the UPF0434 family.

The polypeptide is UPF0434 protein Bfl377 (Blochmanniella floridana).